Consider the following 343-residue polypeptide: MKIAVDAMGGDNAPQVIIEGVEEARDLYPDLEFDLYGNPDKVKPLIKNNERLNIVATSEEISMGEEPVRAIRRKKDSSIVRAATAVKEGKADAFFSAGNTGAILAAGLFIVGRIKGIDRPGLTSILPIAKPGASRHNFVYLDTGANAESKEKNLEQYAYLGKFYAENVLGVANPRIALLNNGAEEDKGDKLHKEVWQILNSKDDLNFVGNIESGDLLFGKADVVVSDGWTANAALKATEGTAKMMMTLIKDGILHGGLRAKLGYLMLKPVFHQIGQKMSASTYGGAVLLGLKAPVVKTHGSADALAVKNTISQIRTMLKTGVIEKTVEFFDSTENLDNSQKNE.

The protein belongs to the PlsX family. In terms of assembly, homodimer. Probably interacts with PlsY.

It is found in the cytoplasm. It carries out the reaction a fatty acyl-[ACP] + phosphate = an acyl phosphate + holo-[ACP]. The protein operates within lipid metabolism; phospholipid metabolism. In terms of biological role, catalyzes the reversible formation of acyl-phosphate (acyl-PO(4)) from acyl-[acyl-carrier-protein] (acyl-ACP). This enzyme utilizes acyl-ACP as fatty acyl donor, but not acyl-CoA. In Limosilactobacillus reuteri (strain DSM 20016) (Lactobacillus reuteri), this protein is Phosphate acyltransferase.